A 103-amino-acid chain; its full sequence is Large ribosomal subunit protein bL21 (103 aa).

The protein belongs to the bacterial ribosomal protein bL21 family. In terms of assembly, part of the 50S ribosomal subunit. Contacts protein L20.

In terms of biological role, this protein binds to 23S rRNA in the presence of protein L20. This chain is Large ribosomal subunit protein bL21, found in Mycobacterium tuberculosis (strain ATCC 25618 / H37Rv).